The sequence spans 891 residues: Fanconi-associated nuclease 1 homolog (891 aa).

Mn(2+) is bound by residues Glu-712, Asp-833, Glu-852, and Val-853. The VRR-NUC domain occupies Gly-770 to Arg-884.

It belongs to the FAN1 family. It depends on Mn(2+) as a cofactor. The cofactor is Mg(2+).

The protein resides in the nucleus. The catalysed reaction is Hydrolytically removes 5'-nucleotides successively from the 3'-hydroxy termini of 3'-hydroxy-terminated oligonucleotides.. Its function is as follows. Nuclease required for the repair of DNA interstrand cross-links (ICLs). Acts as a 5'-3' exonuclease that anchors at a cut end of DNA and cleaves DNA successively at every third nucleotide, allowing to excise an ICL from one strand through flanking incisions. May act upstream of the helicase RECQL4A and the ATPase RAD5A, which is involved in error-free post-replicative repair. Functions independently of MUS81 pathway, but in a similar pathway with RECQ4A, RAD5A and MFH1 in ICL repair. In Arabidopsis thaliana (Mouse-ear cress), this protein is Fanconi-associated nuclease 1 homolog.